Here is a 75-residue protein sequence, read N- to C-terminus: Movement protein TGBp3 (75 aa).

The Lumenal portion of the chain corresponds to 1-2; the sequence is MR. A helical membrane pass occupies residues 3–23; it reads VLDLILALITAAVVGYTIALV. The Cytoplasmic portion of the chain corresponds to 24–75; the sequence is SNSGCYVHFDGRSATTTCPPGPWVESIANGLYTAGLARPHPEPECERRQSSW.

The protein belongs to the Tymovirales TGBp3 protein family.

The protein localises to the host endoplasmic reticulum membrane. Plays a role in viral cell-to-cell propagation, by facilitating genome transport to neighboring plant cells through plasmosdesmata. May induce the formation of granular vesicles derived from the Endoplasmic reticulum, which align on actin filaments. This Strawberry mild yellow edge-associated virus (SMYEaV) protein is Movement protein TGBp3.